We begin with the raw amino-acid sequence, 429 residues long: Serine--tRNA ligase (429 aa).

An L-serine-binding site is contributed by 236–238; that stretch reads TAE. 267–269 serves as a coordination point for ATP; that stretch reads RSE. Residue glutamate 290 participates in L-serine binding. 354–357 provides a ligand contact to ATP; the sequence is EISS. Serine 390 lines the L-serine pocket.

This sequence belongs to the class-II aminoacyl-tRNA synthetase family. Type-1 seryl-tRNA synthetase subfamily. As to quaternary structure, homodimer. The tRNA molecule binds across the dimer.

The protein resides in the cytoplasm. The enzyme catalyses tRNA(Ser) + L-serine + ATP = L-seryl-tRNA(Ser) + AMP + diphosphate + H(+). It catalyses the reaction tRNA(Sec) + L-serine + ATP = L-seryl-tRNA(Sec) + AMP + diphosphate + H(+). Its pathway is aminoacyl-tRNA biosynthesis; selenocysteinyl-tRNA(Sec) biosynthesis; L-seryl-tRNA(Sec) from L-serine and tRNA(Sec): step 1/1. Catalyzes the attachment of serine to tRNA(Ser). Is also able to aminoacylate tRNA(Sec) with serine, to form the misacylated tRNA L-seryl-tRNA(Sec), which will be further converted into selenocysteinyl-tRNA(Sec). The protein is Serine--tRNA ligase of Alcanivorax borkumensis (strain ATCC 700651 / DSM 11573 / NCIMB 13689 / SK2).